Consider the following 222-residue polypeptide: Cytochrome b6 (222 aa).

Residues 39–59 (IFYCLGGITLTCFIIQFATGF) traverse the membrane as a helical segment. Residue Cys42 participates in heme c binding. His93 and His107 together coordinate heme b. Transmembrane regions (helical) follow at residues 97-117 (ASMM…TGGF), 123-143 (LTWI…VTGY), and 193-213 (LHTF…FLMI). Positions 194 and 209 each coordinate heme b.

The protein belongs to the cytochrome b family. PetB subfamily. In terms of assembly, the 4 large subunits of the cytochrome b6-f complex are cytochrome b6, subunit IV (17 kDa polypeptide, PetD), cytochrome f and the Rieske protein, while the 4 small subunits are PetG, PetL, PetM and PetN. The complex functions as a dimer. Heme b is required as a cofactor. The cofactor is heme c.

It localises to the cellular thylakoid membrane. Component of the cytochrome b6-f complex, which mediates electron transfer between photosystem II (PSII) and photosystem I (PSI), cyclic electron flow around PSI, and state transitions. The chain is Cytochrome b6 (petB) from Picosynechococcus sp. (strain ATCC 27264 / PCC 7002 / PR-6) (Agmenellum quadruplicatum).